Here is a 344-residue protein sequence, read N- to C-terminus: Trace amine-associated receptor 8b (344 aa).

Residues 1–31 (MTSNFSQPALQLCYENTNGSCIKTPYSPGPR) are Extracellular-facing. N-linked (GlcNAc...) asparagine glycans are attached at residues Asn-4 and Asn-18. 2 cysteine pairs are disulfide-bonded: Cys-21-Cys-185 and Cys-104-Cys-189. Residues 32 to 52 (VILYMVFGFGAVLAVCGNLLV) form a helical membrane-spanning segment. Residues 53-67 (VISVLHFKQLHSPAN) are Cytoplasmic-facing. A helical transmembrane segment spans residues 68 to 88 (FLIASLASADFLVGISVMPFS). Residues 89–111 (MVRSIESCWYFGDAFCSLHSCCD) are Extracellular-facing. A helical transmembrane segment spans residues 112–132 (VAFCYSSALHLCFISVDRYIA). The Cytoplasmic portion of the chain corresponds to 133–146 (VTDPLVYPTKFTVS). A helical membrane pass occupies residues 147-167 (VSGICISISWILPLVYSSAVF). Residues 168-195 (YTGISAKGIESLVSALNCVGGCQIVVNQ) lie on the Extracellular side of the membrane. The helical transmembrane segment at 196 to 216 (DWVLIDFLLFFIPTLVMIILY) threads the bilayer. Over 217–260 (SKIFLVAKQQAVKIETSVSDNRGESSSESHKARVAKRERKAAKT) the chain is Cytoplasmic. A helical transmembrane segment spans residues 261–281 (LGVTVVAFMVSWLPYTIDSLV). Residue Asp-282 is a topological domain, extracellular. A helical membrane pass occupies residues 283–303 (AFVGFITPAYVYEICCWSAYY). At 304 to 344 (NSAMNPLIYAFFYPWFRKAIKLILSGEILKSHSSTMSLFSE) the chain is on the cytoplasmic side.

The protein belongs to the G-protein coupled receptor 1 family. As to expression, specifically expressed in neurons of the olfactory epithelium.

The protein localises to the cell membrane. In terms of biological role, olfactory receptor specific for trace amines. Trace amine compounds are enriched in animal body fluids and act on trace amine-associated receptors (TAARs) to elicit both intraspecific and interspecific innate behaviors. Ligand-binding causes a conformation change that triggers signaling via G alpha proteins, possibly G(i)/G(o) G alpha proteins. In Mus musculus (Mouse), this protein is Trace amine-associated receptor 8b.